The primary structure comprises 406 residues: Endoglucanase 1 (406 aa).

The signal sequence occupies residues 1 to 43 (MNSKKIGAMIAAAVLSLIVMTPAATRKIVQRQTRNSSTAVENS). Composition is skewed to polar residues over residues 30–41 (QRQTRNSSTAVE) and 51–62 (ENVPVSQTHTND). A disordered region spans residues 30 to 62 (QRQTRNSSTAVENSAADESETENVPVSQTHTND). E210 (proton donor) is an active-site residue. The active-site Nucleophile is E330.

This sequence belongs to the glycosyl hydrolase 5 (cellulase A) family.

The catalysed reaction is Endohydrolysis of (1-&gt;4)-beta-D-glucosidic linkages in cellulose, lichenin and cereal beta-D-glucans.. The chain is Endoglucanase 1 (Eg I) from Ruminococcus albus.